Consider the following 477-residue polypeptide: RNA pseudouridine synthase 6, chloroplastic (477 aa).

The N-terminal 52 residues, 1 to 52 (MPKAAASLASLLPQLWHRPVQPPPFLHRALSSSSPLLRRHRAALHSPAAPLS), are a transit peptide targeting the chloroplast. Residues 98–205 (EVAVDFISRS…FPRCYEIDWK (108 aa)) form the S4 RNA-binding domain. Asp258 is an active-site residue.

The protein belongs to the pseudouridine synthase RluA family.

Its subcellular location is the plastid. The protein localises to the chloroplast. The catalysed reaction is a uridine in RNA = a pseudouridine in RNA. This is RNA pseudouridine synthase 6, chloroplastic from Oryza sativa subsp. japonica (Rice).